Here is a 127-residue protein sequence, read N- to C-terminus: Fluoride-specific ion channel FluC (127 aa).

4 consecutive transmembrane segments (helical) span residues 4–24, 35–55, 71–91, and 101–121; these read IMLA…WLGL, VGTL…LAWF, TGLC…VFLL, and LNVA…FWLF. Positions 75 and 78 each coordinate Na(+).

This sequence belongs to the fluoride channel Fluc/FEX (TC 1.A.43) family.

The protein localises to the cell inner membrane. The catalysed reaction is fluoride(in) = fluoride(out). Its activity is regulated as follows. Na(+) is not transported, but it plays an essential structural role and its presence is essential for fluoride channel function. Fluoride-specific ion channel. Important for reducing fluoride concentration in the cell, thus reducing its toxicity. This Cronobacter sakazakii (strain ATCC BAA-894) (Enterobacter sakazakii) protein is Fluoride-specific ion channel FluC.